The primary structure comprises 719 residues: Translation initiation factor IF-2 (719 aa).

The span at 54 to 67 (NKEETKPNVDEKPP) shows a compositional bias: basic and acidic residues. Disordered stretches follow at residues 54–75 (NKEETKPNVDEKPPNQDTLTDN) and 97–122 (STKNVTPNGNNKKDKKKKNKKDKRKN). Over residues 109–122 (KDKKKKNKKDKRKN) the composition is skewed to basic residues. Positions 221–390 (HRSPVVTVMG…LLVSEMSELK (170 aa)) constitute a tr-type G domain. Residues 230–237 (GHVDHGKT) form a G1 region. A GTP-binding site is contributed by 230-237 (GHVDHGKT). The G2 stretch occupies residues 255-259 (GITQH). The interval 276-279 (DTPG) is G3. GTP-binding positions include 276–280 (DTPGH) and 330–333 (NKMD). The segment at 330 to 333 (NKMD) is G4. Residues 366–368 (SAR) are G5.

This sequence belongs to the TRAFAC class translation factor GTPase superfamily. Classic translation factor GTPase family. IF-2 subfamily.

The protein localises to the cytoplasm. Functionally, one of the essential components for the initiation of protein synthesis. Protects formylmethionyl-tRNA from spontaneous hydrolysis and promotes its binding to the 30S ribosomal subunits. Also involved in the hydrolysis of GTP during the formation of the 70S ribosomal complex. The polypeptide is Translation initiation factor IF-2 (Alkaliphilus oremlandii (strain OhILAs) (Clostridium oremlandii (strain OhILAs))).